Consider the following 303-residue polypeptide: Oxygen-dependent coproporphyrinogen-III oxidase (303 aa).

Residue serine 93 participates in substrate binding. Positions 97 and 107 each coordinate a divalent metal cation. Residue histidine 107 is the Proton donor of the active site. 109–111 (NVR) contributes to the substrate binding site. Positions 149 and 179 each coordinate a divalent metal cation. Residues 244–279 (YVEFNLVFDRGTLFGLQSGGRTESILLSMPPLAQWR) are important for dimerization. 262–264 (GGR) provides a ligand contact to substrate.

Belongs to the aerobic coproporphyrinogen-III oxidase family. In terms of assembly, homodimer. The cofactor is a divalent metal cation.

It localises to the cytoplasm. The enzyme catalyses coproporphyrinogen III + O2 + 2 H(+) = protoporphyrinogen IX + 2 CO2 + 2 H2O. Its pathway is porphyrin-containing compound metabolism; protoporphyrin-IX biosynthesis; protoporphyrinogen-IX from coproporphyrinogen-III (O2 route): step 1/1. Involved in the heme biosynthesis. Catalyzes the aerobic oxidative decarboxylation of propionate groups of rings A and B of coproporphyrinogen-III to yield the vinyl groups in protoporphyrinogen-IX. The polypeptide is Oxygen-dependent coproporphyrinogen-III oxidase (Bordetella pertussis (strain Tohama I / ATCC BAA-589 / NCTC 13251)).